Here is a 141-residue protein sequence, read N- to C-terminus: Putative antiporter subunit mnhB2 (141 aa).

Transmembrane regions (helical) follow at residues 10–30 (TVTK…FFAG), 35–55 (GGGF…FLAF), 70–90 (ILMI…TFFG), and 114–134 (ITLF…TVML).

Belongs to the CPA3 antiporters (TC 2.A.63) subunit B family. In terms of assembly, may form a heterooligomeric complex that consists of seven subunits: mnhA2, mnhB2, mnhC2, mnhD2, mnhE2, mnhF2 and mnhG2.

It is found in the cell membrane. The chain is Putative antiporter subunit mnhB2 (mnhB2) from Staphylococcus aureus (strain MRSA252).